The primary structure comprises 583 residues: Peptidyl-prolyl cis-trans isomerase FKBP10 (583 aa).

Positions 1–27 (MLRAGPPSHTLLRLPLLQLLLLLLVQA) are cleaved as a signal peptide. 4 consecutive PPIase FKBP-type domains span residues 63-151 (GDFV…LDVW), 175-263 (SDFV…IDVH), 287-375 (GDFM…IDFH), and 400-487 (GDFV…VSRE). N-linked (GlcNAc...) asparagine glycosylation is found at Asn71, Asn183, and Asn295. EF-hand domains follow at residues 498–533 (WHEDPPAHLFEHMDLNKDGEVPVEEFSTFIKAQVSE) and 543–578 (DPEKTIGDMFQNQDRNQDGKITAEELKLKSDEDQDR). Ca(2+)-binding residues include Asp511, Asn513, Asp515, Glu517, Glu522, Asp556, Asn558, Asp560, Lys562, and Glu567. Positions 534–583 (GKGRLLPGQDPEKTIGDMFQNQDRNQDGKITAEELKLKSDEDQDRVHEEL) are disordered. The segment covering 557–583 (RNQDGKITAEELKLKSDEDQDRVHEEL) has biased composition (basic and acidic residues). The Prevents secretion from ER signature appears at 580-583 (HEEL).

Glycosylated and phosphorylated.

It localises to the endoplasmic reticulum lumen. It catalyses the reaction [protein]-peptidylproline (omega=180) = [protein]-peptidylproline (omega=0). Its activity is regulated as follows. Inhibited by both FK506 and rapamycin, but not by cyclosporin A. Functionally, PPIases accelerate the folding of proteins during protein synthesis. The polypeptide is Peptidyl-prolyl cis-trans isomerase FKBP10 (FKBP10) (Bos taurus (Bovine)).